Consider the following 293-residue polypeptide: DegV domain-containing protein MG326 homolog (293 aa).

Residues 3–289 form the DegV domain; the sequence is TAIITDSTAS…IDAFSISLLL (287 aa). Hexadecanoate-binding residues include T62 and S94.

Functionally, may bind long-chain fatty acids, such as palmitate, and may play a role in lipid transport or fatty acid metabolism. The protein is DegV domain-containing protein MG326 homolog of Mycoplasma pneumoniae (strain ATCC 29342 / M129 / Subtype 1) (Mycoplasmoides pneumoniae).